An 80-amino-acid polypeptide reads, in one-letter code: Conotoxin ArMKLT2-0321 (80 aa).

Positions 1 to 21 (MKLTCVLIIAMLFLIVCQLNT) are cleaved as a signal peptide. A propeptide spanning residues 22–48 (ADDSTDKQEYRAVKLRDAMRNFKGSKR) is cleaved from the precursor. 3 cysteine pairs are disulfide-bonded: cysteine 50–cysteine 63, cysteine 57–cysteine 68, and cysteine 62–cysteine 77.

This sequence belongs to the conotoxin O1 superfamily. As to expression, expressed by the venom duct.

It localises to the secreted. The sequence is that of Conotoxin ArMKLT2-0321 from Conus arenatus (Sand-dusted cone).